The sequence spans 304 residues: Acetylglutamate kinase (304 aa).

Substrate is bound by residues 82–83 (GG), Arg104, and Asn197.

Belongs to the acetylglutamate kinase family. ArgB subfamily.

It localises to the cytoplasm. The catalysed reaction is N-acetyl-L-glutamate + ATP = N-acetyl-L-glutamyl 5-phosphate + ADP. Its pathway is amino-acid biosynthesis; L-arginine biosynthesis; N(2)-acetyl-L-ornithine from L-glutamate: step 2/4. Catalyzes the ATP-dependent phosphorylation of N-acetyl-L-glutamate. The polypeptide is Acetylglutamate kinase (Prochlorococcus marinus (strain NATL1A)).